The following is an 80-amino-acid chain: Serine palmitoyltransferase small subunit A (80 aa).

The Cytoplasmic segment spans residues 1–21; that stretch reads MKVSCEDINGPRSSLSRAWNH. Residues 22 to 38 form a helical membrane-spanning segment; it reads MSWLYYQYLLVTALYML. Residues 39-43 are Lumenal-facing; that stretch reads EPWER. Residues 44-66 traverse the membrane as a helical segment; sequence TIFNSMLVSIVGMALYTGYIFMP. Residues 67–80 are Cytoplasmic-facing; it reads QHILAILHYFEIVQ.

It belongs to the SPTSS family. SPTSSA subfamily. In terms of assembly, component of the serine palmitoyltransferase (SPT) complex, which is composed of SPTLC1, SPTLC2 or SPTLC3 and SPTSSA or SPTSSB. The heterodimer consisting of SPTLC1 and SPTLC2/SPTLC3 forms the catalytic core of the enzyme, while SPTSSA or SPTSSB subunits determine substrate specificity. SPT also interacts with ORMDL proteins, especially ORMDL3, which negatively regulate SPT activity in the presence of ceramides.

It localises to the endoplasmic reticulum membrane. It participates in lipid metabolism; sphingolipid metabolism. In terms of biological role, component of the serine palmitoyltransferase multisubunit enzyme (SPT) that catalyzes the initial and rate-limiting step in sphingolipid biosynthesis by condensing L-serine and activated acyl-CoA (most commonly palmitoyl-CoA) to form long-chain bases. The SPT complex is composed of SPTLC1, SPTLC2 or SPTLC3 and SPTSSA or SPTSSB. Within this complex, the heterodimer consisting of SPTLC1 and SPTLC2/SPTLC3 forms the catalytic core. Within the SPT complex, SPTSSA stimulates the catalytic activity and plays a role in substrate specificity, which depends upon the overall complex composition. The SPTLC1-SPTLC2-SPTSSA complex shows a strong preference for C16-CoA substrate, while the SPTLC1-SPTLC3-SPTSSA isozyme uses both C14-CoA and C16-CoA as substrates, with a slight preference for C14-CoA. Independently of its action as a SPT component, may be involved in MBOAT7 localization to mitochondria-associated membranes, a membrane bridge between the endoplasmic reticulum and mitochondria, may hence affect MBOAT7-catalyzed incorporation of arachidonic acid into phosphatidylinositol. The sequence is that of Serine palmitoyltransferase small subunit A (sptssa) from Xenopus tropicalis (Western clawed frog).